Consider the following 221-residue polypeptide: GTP cyclohydrolase III (221 aa).

It belongs to the archaeal-type GTP cyclohydrolase family.

It catalyses the reaction GTP + 3 H2O = 2-amino-5-formylamino-6-(5-phospho-D-ribosylamino)pyrimidin-4(3H)-one + 2 phosphate + 2 H(+). Its function is as follows. Catalyzes the formation of 2-amino-5-formylamino-6-ribofuranosylamino-4(3H)-pyrimidinone ribonucleotide monophosphate and inorganic phosphate from GTP. Also has an independent pyrophosphate phosphohydrolase activity. This chain is GTP cyclohydrolase III, found in Pyrobaculum neutrophilum (strain DSM 2338 / JCM 9278 / NBRC 100436 / V24Sta) (Thermoproteus neutrophilus).